A 198-amino-acid chain; its full sequence is Endonuclease V (198 aa).

Mg(2+)-binding residues include Asp-38 and Asp-101.

It belongs to the endonuclease V family. Requires Mg(2+) as cofactor.

The protein localises to the cytoplasm. It carries out the reaction Endonucleolytic cleavage at apurinic or apyrimidinic sites to products with a 5'-phosphate.. Functionally, DNA repair enzyme involved in the repair of deaminated bases. Selectively cleaves double-stranded DNA at the second phosphodiester bond 3' to a deoxyinosine leaving behind the intact lesion on the nicked DNA. The polypeptide is Endonuclease V (Saccharolobus islandicus (strain M.14.25 / Kamchatka #1) (Sulfolobus islandicus)).